The chain runs to 120 residues: Ribosome-binding factor A (120 aa).

This sequence belongs to the RbfA family. Monomer. Binds 30S ribosomal subunits, but not 50S ribosomal subunits or 70S ribosomes.

It localises to the cytoplasm. One of several proteins that assist in the late maturation steps of the functional core of the 30S ribosomal subunit. Associates with free 30S ribosomal subunits (but not with 30S subunits that are part of 70S ribosomes or polysomes). Required for efficient processing of 16S rRNA. May interact with the 5'-terminal helix region of 16S rRNA. This chain is Ribosome-binding factor A, found in Rickettsia conorii (strain ATCC VR-613 / Malish 7).